A 367-amino-acid chain; its full sequence is Polygalacturonase (367 aa).

Positions 1–19 (MSIRLIAVLSAASIAVTSA) are cleaved as a signal peptide. A disulfide bond links cysteine 27 and cysteine 42. A glycan (N-linked (GlcNAc...) asparagine) is linked at asparagine 185. Residues 187–208 (TDQLTIEDTVVKNQDDCIAVNQ) form a PbH1 1 repeat. The active-site Proton donor is the aspartate 201. Cysteine 203 and cysteine 219 form a disulfide bridge. Histidine 223 is a catalytic residue. Residues 240–261 (VRNVTFSNSVVRKSRNGIHIKT) form a PbH1 2 repeat. N-linked (GlcNAc...) asparagine glycosylation occurs at asparagine 242. Residues cysteine 334 and cysteine 339 are joined by a disulfide bond. N-linked (GlcNAc...) asparagine glycans are attached at residues asparagine 343 and asparagine 357. A disulfide bridge links cysteine 358 with cysteine 367.

Belongs to the glycosyl hydrolase 28 family. Expressed in larval carcasses and gut, and adult gut.

It is found in the secreted. The protein localises to the cell wall. The catalysed reaction is (1,4-alpha-D-galacturonosyl)n+m + H2O = (1,4-alpha-D-galacturonosyl)n + (1,4-alpha-D-galacturonosyl)m.. In Phaedon cochleariae (Mustard beetle), this protein is Polygalacturonase.